The primary structure comprises 422 residues: Putative FBD-associated F-box protein At1g55030 (422 aa).

Positions 8 to 60 constitute an F-box domain; it reads TDMISQLPEPLILQILGSLPTKVAITTSVLSKQWQSHWKMMPKLEFDSFLRRL. 3 LRR repeats span residues 132–153, 154–175, and 180–201; these read TLET…VYLK, SLKT…INLL, and NLQD…TIAV. The FBD domain maps to 342–391; it reads EWNQPKNVPECLHHLEKFIWEGYKWKREEIEVAKYILKNTNRLKRAIFSL.

The polypeptide is Putative FBD-associated F-box protein At1g55030 (Arabidopsis thaliana (Mouse-ear cress)).